We begin with the raw amino-acid sequence, 119 residues long: Protein TusC (119 aa).

Belongs to the DsrF/TusC family. In terms of assembly, heterohexamer, formed by a dimer of trimers. The hexameric TusBCD complex contains 2 copies each of TusB, TusC and TusD. The TusBCD complex interacts with TusE.

The protein localises to the cytoplasm. Functionally, part of a sulfur-relay system required for 2-thiolation of 5-methylaminomethyl-2-thiouridine (mnm(5)s(2)U) at tRNA wobble positions. This is Protein TusC from Shigella sonnei (strain Ss046).